A 133-amino-acid polypeptide reads, in one-letter code: ATP synthase epsilon chain, chloroplastic (133 aa).

This sequence belongs to the ATPase epsilon chain family. F-type ATPases have 2 components, CF(1) - the catalytic core - and CF(0) - the membrane proton channel. CF(1) has five subunits: alpha(3), beta(3), gamma(1), delta(1), epsilon(1). CF(0) has three main subunits: a, b and c.

It localises to the plastid. The protein localises to the chloroplast thylakoid membrane. Produces ATP from ADP in the presence of a proton gradient across the membrane. This is ATP synthase epsilon chain, chloroplastic from Jasminum nudiflorum (Winter jasmine).